Consider the following 225-residue polypeptide: Probable GTP-binding protein EngB (225 aa).

The region spanning 40 to 224 (GPPEVAFAGR…RAAIVHAVTA (185 aa)) is the EngB-type G domain. GTP contacts are provided by residues 48-55 (GRSNVGKS), 75-79 (GRTQE), 102-105 (DMPG), 169-172 (TKAD), and 203-205 (TSS). Ser55 and Thr77 together coordinate Mg(2+).

This sequence belongs to the TRAFAC class TrmE-Era-EngA-EngB-Septin-like GTPase superfamily. EngB GTPase family. Mg(2+) serves as cofactor.

Necessary for normal cell division and for the maintenance of normal septation. This is Probable GTP-binding protein EngB from Chelativorans sp. (strain BNC1).